Consider the following 618-residue polypeptide: MALLQISEPGQAPDPHQRRIAVGIDLGTTHSLVAAVRNGVAECLPDDQGRVILPSAVRYLDRERRQIGFDALAARAQDAANTITSVKRLMGRGLADIANRESMSYRLVDEGGMVKVETAAGIKSPVEISAEILATLRYRAEDTFDGELYGAVITVPAYFDEGQRQATKDAAQLAGLNVLRLISEPTAAAIAYGLDNASEGVYAVYDLGGGTFDISILRLTQGVFEVIATGGDSALGGDDYDHALADFVLAQTGLQVGSDADKAAVLVAARAAKEALTDADSVAFHAKLAGGAARFDLARAQFDAATKPLTDRTIAAVRKALRDAKLKPDDLQGIVLVGGSTRMPQIRRAVAEFFGREPLVNLNPDEVVALGAAIQANQLAGNNGAGDLLLLDVIPLSLGIETMGGLVERIVPRNQTIPTAMAQDFTTYQDGQTALALHVVQGERDLVADCRSLARFTLRGIPPMAAGAARIRVTFTVDADGLLSVSAKEQGSGVEASVAVKPSYGLSDDQIATMLQESFSTAQQDMQARALVEARVDAERMLLATQSALDADGDLLGEEERAVIDASMAKLREAAKGNDAAAIEGATKALANDTEAFAAQRMNAGIARALSGRKLESL.

The protein belongs to the heat shock protein 70 family.

Its function is as follows. Chaperone involved in the maturation of iron-sulfur cluster-containing proteins. Has a low intrinsic ATPase activity which is markedly stimulated by HscB. The sequence is that of Chaperone protein HscA homolog from Variovorax paradoxus (strain S110).